The following is a 127-amino-acid chain: UPF0716 protein YtzA (127 aa).

4 helical membrane-spanning segments follow: residues Phe-3–Leu-22, Ile-26–Ala-46, Ala-70–Leu-90, and Leu-93–Leu-115.

Belongs to the UPF0716 (FxsA) family.

The protein resides in the cell membrane. The sequence is that of UPF0716 protein YtzA (ytzA) from Bacillus subtilis (strain 168).